The sequence spans 390 residues: F-box/kelch-repeat protein At3g04660 (390 aa).

Positions 18 to 67 constitute an F-box domain; the sequence is YDPSSILPLELKIEILMKSPPKSIAKLGFVSNHWSSIIRGQVFTDLYMRR. Kelch repeat units lie at residues 115 to 161 and 272 to 323; these read FSPP…FGYD and MVDH…DQRV.

Part of a SCF (ASK-cullin-F-box) protein ligase complex. Interacts with SKP1A/ASK1, SKP1B/ASK2, ASK11 and ASK13.

The protein localises to the nucleus. Its pathway is protein modification; protein ubiquitination. Component of SCF(ASK-cullin-F-box) E3 ubiquitin ligase complexes, which may mediate the ubiquitination and subsequent proteasomal degradation of target proteins. The chain is F-box/kelch-repeat protein At3g04660 from Arabidopsis thaliana (Mouse-ear cress).